The chain runs to 207 residues: Serotype 2 fimbrial subunit (207 aa).

Residues 1 to 26 (MQIPFQRALRLCLRAALAAIASAAHA) form the signal peptide. Cys-42 and Cys-85 are oxidised to a cystine.

This sequence belongs to the fimbrial protein family.

It localises to the fimbrium. Functionally, bordetella pertussis is the causative agent of whooping cough. An essential step in the disease process is the attachment of the bacteria to the ciliated epithelium of the respiratory tract, enabling the organism to resist normal host-clearance mechanisms. It is unclear which bacterial cell surface component are responsible for adherence but the fimbriae of B.pertussis are prime candidates for being involved in this process. This chain is Serotype 2 fimbrial subunit (fim2), found in Bordetella pertussis (strain Tohama I / ATCC BAA-589 / NCTC 13251).